Consider the following 200-residue polypeptide: Golgi to ER traffic protein 1 (200 aa).

Residues 1–6 are Lumenal-facing; the sequence is MEPYTL. The helical transmembrane segment at 7–26 threads the bilayer; the sequence is LLFIFVIQIVKQIISAVGKQ. At 27-113 the chain is on the cytoplasmic side; the sequence is SIESISWVLY…KVNTFTGYLI (87 aa). A coiled-coil region spans residues 75–107; it reads AKWTKLNRQHDKLVAEIEQLQKEVDLDKVKVNT. Residues 114–134 traverse the membrane as a helical segment; that stretch reads AILTSIPIWFFRVWYRSVVLF. Residues 135–158 lie on the Lumenal side of the membrane; it reads YFPPGILPRALEWSIALPFTVTGG. Residues 159 to 175 traverse the membrane as a helical segment; it reads VSLTVWMMAAGAVASSL. Residues 176–200 lie on the Cytoplasmic side of the membrane; the sequence is TFLFMFPFEKAVPKPVLAKKSPQQL.

The protein belongs to the WRB/GET1 family. As to quaternary structure, component of the Golgi to ER traffic (GET) complex, which is composed of GET1, GET2 and GET3. Within the complex, GET1 and GET2 form a heterotetramer which is stabilized by phosphatidylinositol binding and which binds to the GET3 homodimer.

The protein localises to the endoplasmic reticulum membrane. Its subcellular location is the golgi apparatus membrane. Functionally, required for the post-translational delivery of tail-anchored (TA) proteins to the endoplasmic reticulum. Together with GET2, acts as a membrane receptor for soluble GET3, which recognizes and selectively binds the transmembrane domain of TA proteins in the cytosol. The GET complex cooperates with the HDEL receptor ERD2 to mediate the ATP-dependent retrieval of resident ER proteins that contain a C-terminal H-D-E-L retention signal from the Golgi to the ER. The chain is Golgi to ER traffic protein 1 from Meyerozyma guilliermondii (strain ATCC 6260 / CBS 566 / DSM 6381 / JCM 1539 / NBRC 10279 / NRRL Y-324) (Yeast).